The primary structure comprises 72 residues: Protein kish (72 aa).

An N-terminal signal peptide occupies residues Met-1–Gly-26. Residues Ser-27 to Ala-47 lie on the Extracellular side of the membrane. The chain crosses the membrane as a helical span at residues Ala-48–Trp-68. Residues Thr-69–Asn-72 are Cytoplasmic-facing.

This sequence belongs to the KISH family.

Its subcellular location is the golgi apparatus membrane. Functionally, involved in the early part of the secretory pathway. The protein is Protein kish (tmem167) of Dictyostelium discoideum (Social amoeba).